Consider the following 391-residue polypeptide: Carbamoyl phosphate synthase small chain (391 aa).

Positions 1-189 (MIKSALLVLE…DLPAAKQPED (189 aa)) are CPSase. L-glutamine contacts are provided by Ser-47, Gly-241, and Gly-243. In terms of domain architecture, Glutamine amidotransferase type-1 spans 193-380 (HVVAYDYGVK…IELIEAYRAS (188 aa)). Cys-269 functions as the Nucleophile in the catalytic mechanism. 5 residues coordinate L-glutamine: Leu-270, Gln-273, Asn-311, Gly-313, and Phe-314. Active-site residues include His-353 and Glu-355.

It belongs to the CarA family. In terms of assembly, composed of two chains; the small (or glutamine) chain promotes the hydrolysis of glutamine to ammonia, which is used by the large (or ammonia) chain to synthesize carbamoyl phosphate. Tetramer of heterodimers (alpha,beta)4.

It catalyses the reaction hydrogencarbonate + L-glutamine + 2 ATP + H2O = carbamoyl phosphate + L-glutamate + 2 ADP + phosphate + 2 H(+). It carries out the reaction L-glutamine + H2O = L-glutamate + NH4(+). It participates in amino-acid biosynthesis; L-arginine biosynthesis; carbamoyl phosphate from bicarbonate: step 1/1. The protein operates within pyrimidine metabolism; UMP biosynthesis via de novo pathway; (S)-dihydroorotate from bicarbonate: step 1/3. Its function is as follows. Small subunit of the glutamine-dependent carbamoyl phosphate synthetase (CPSase). CPSase catalyzes the formation of carbamoyl phosphate from the ammonia moiety of glutamine, carbonate, and phosphate donated by ATP, constituting the first step of 2 biosynthetic pathways, one leading to arginine and/or urea and the other to pyrimidine nucleotides. The small subunit (glutamine amidotransferase) binds and cleaves glutamine to supply the large subunit with the substrate ammonia. The chain is Carbamoyl phosphate synthase small chain from Yersinia pestis.